The primary structure comprises 170 residues: Ureidoglycolate lyase (170 aa).

Belongs to the ureidoglycolate lyase family. In terms of assembly, homodimer. It depends on Ni(2+) as a cofactor.

It catalyses the reaction (S)-ureidoglycolate = urea + glyoxylate. It functions in the pathway nitrogen metabolism; (S)-allantoin degradation. Functionally, catalyzes the catabolism of the allantoin degradation intermediate (S)-ureidoglycolate, generating urea and glyoxylate. Involved in the utilization of allantoin as nitrogen source. The chain is Ureidoglycolate lyase from Burkholderia mallei (strain NCTC 10247).